Consider the following 998-residue polypeptide: MARARPPPPPSPPPGLLPLLPPLLLLPLLLLPAGCRALEETLMDTKWVTSELAWTSHPESGWEEVSGYDEAMNPIRTYQVCNVRESSQNNWLRTGFIWRRDVQRVYVELKFTVRDCNSIPNIPGSCKETFNLFYYEADSDVASASSPFWMENPYVKVDTIAPDESFSRLDAGRVNTKVRSFGPLSKAGFYLAFQDQGACMSLISVRAFYKKCASTTAGFALFPETLTGAEPTSLVIAPGTCIPNAVEVSVPLKLYCNGDGEWMVPVGACTCATGHEPAAKESQCRPCPPGSYKAKQGEGPCLPCPPNSRTTSPAASICTCHNNFYRADSDSADSACTTVPSPPRGVISNVNETSLILEWSEPRDLGGRDDLLYNVICKKCHGAGGASACSRCDDNVEFVPRQLGLTERRVHISHLLAHTRYTFEVQAVNGVSGKSPLPPRYAAVNITTNQAAPSEVPTLRLHSSSGSSLTLSWAPPERPNGVILDYEMKYFEKSEGIASTVTSQMNSVQLDGLRPDARYVVQVRARTVAGYGQYSRPAEFETTSERGSGAQQLQEQLPLIVGSATAGLVFVVAVVVIAIVCLRKQRHGSDSEYTEKLQQYIAPGMKVYIDPFTYEDPNEAVREFAKEIDVSCVKIEEVIGAGEFGEVCRGRLKQPGRREVFVAIKTLKVGYTERQRRDFLSEASIMGQFDHPNIIRLEGVVTKSRPVMILTEFMENCALDSFLRLNDGQFTVIQLVGMLRGIAAGMKYLSEMNYVHRDLAARNILVNSNLVCKVSDFGLSRFLEDDPSDPTYTSSLGGKIPIRWTAPEAIAYRKFTSASDVWSYGIVMWEVMSYGERPYWDMSNQDVINAVEQDYRLPPPMDCPTALHQLMLDCWVRDRNLRPKFSQIVNTLDKLIRNAASLKVIASAQSGMSQPLLDRTVPDYTTFTTVGDWLDAIKMGRYKESFVSAGFASFDLVAQMTAEDLLRIGVTLAGHQKKILSSIQDMRLQMNQTLPVQV.

Residues 1 to 33 (MARARPPPPPSPPPGLLPLLPPLLLLPLLLLPA) form the signal peptide. Residues 34–559 (GCRALEETLM…AQQLQEQLPL (526 aa)) lie on the Extracellular side of the membrane. The Eph LBD domain maps to 39 to 217 (EETLMDTKWV…FYKKCASTTA (179 aa)). C81 and C199 form a disulfide bridge. 2 Fibronectin type-III domains span residues 339-451 (VPSP…TNQA) and 452-545 (APSE…TTSE). N351 and N445 each carry an N-linked (GlcNAc...) asparagine glycan. The helical transmembrane segment at 560–580 (IVGSATAGLVFVVAVVVIAIV) threads the bilayer. The Cytoplasmic portion of the chain corresponds to 581–998 (CLRKQRHGSD…QMNQTLPVQV (418 aa)). Y614 is subject to Phosphotyrosine; by autocatalysis. Positions 633 to 896 (VKIEEVIGAG…QIVNTLDKLI (264 aa)) constitute a Protein kinase domain. Residues 639-647 (IGAGEFGEV) and K665 contribute to the ATP site. The active-site Proton acceptor is D758. An SAM domain is found at 925-989 (TTFTTVGDWL…LSSIQDMRLQ (65 aa)). The PDZ-binding signature appears at 996–998 (VQV).

The protein belongs to the protein kinase superfamily. Tyr protein kinase family. Ephrin receptor subfamily. Heterotetramer upon binding of the ligand. The heterotetramer is composed of an ephrin dimer and a receptor dimer. Oligomerization is probably required to induce biological responses. Phosphorylated. Autophosphorylates upon ligand-binding. Autophosphorylation on Tyr-614 is required for interaction with SH2 domain-containing proteins. Post-translationally, ubiquitinated by RNF186, mainly through 'Lys-48' and 'Lys-63'-linked polyubiquitin chains. Ubiquitous.

It localises to the cell membrane. It is found in the cell projection. The protein localises to the dendrite. It carries out the reaction L-tyrosyl-[protein] + ATP = O-phospho-L-tyrosyl-[protein] + ADP + H(+). Receptor tyrosine kinase which binds promiscuously transmembrane ephrin-B family ligands residing on adjacent cells, leading to contact-dependent bidirectional signaling into neighboring cells. The signaling pathway downstream of the receptor is referred to as forward signaling while the signaling pathway downstream of the ephrin ligand is referred to as reverse signaling. Generally has an overlapping and redundant function with EPHB2. Like EPHB2, functions in axon guidance during development regulating for instance the neurons forming the corpus callosum and the anterior commissure, 2 major interhemispheric connections between the temporal lobes of the cerebral cortex. In addition to its role in axon guidance also plays an important redundant role with other ephrin-B receptors in development and maturation of dendritic spines and the formation of excitatory synapses. Controls other aspects of development through regulation of cell migration and positioning. This includes angiogenesis, palate development and thymic epithelium development for instance. Forward and reverse signaling through the EFNB2/EPHB3 complex also regulate migration and adhesion of cells that tubularize the urethra and septate the cloaca. Finally, plays an important role in intestinal epithelium differentiation segregating progenitor from differentiated cells in the crypt. In Homo sapiens (Human), this protein is Ephrin type-B receptor 3 (EPHB3).